Consider the following 284-residue polypeptide: Pantothenate synthetase (284 aa).

Residue 30–37 (MGALHNGH) participates in ATP binding. The active-site Proton donor is His37. Gln61 provides a ligand contact to (R)-pantoate. Position 61 (Gln61) interacts with beta-alanine. 147 to 150 (GEKD) contacts ATP. Gln153 contacts (R)-pantoate. Residues Leu176 and 184 to 187 (SSSR) contribute to the ATP site.

The protein belongs to the pantothenate synthetase family. Homodimer.

Its subcellular location is the cytoplasm. The enzyme catalyses (R)-pantoate + beta-alanine + ATP = (R)-pantothenate + AMP + diphosphate + H(+). It functions in the pathway cofactor biosynthesis; (R)-pantothenate biosynthesis; (R)-pantothenate from (R)-pantoate and beta-alanine: step 1/1. Catalyzes the condensation of pantoate with beta-alanine in an ATP-dependent reaction via a pantoyl-adenylate intermediate. The protein is Pantothenate synthetase of Bartonella henselae (strain ATCC 49882 / DSM 28221 / CCUG 30454 / Houston 1) (Rochalimaea henselae).